Consider the following 386-residue polypeptide: Leupaxin (386 aa).

An N-acetylmethionine modification is found at M1. The LD motif 1 motif lies at 3–15 (ELDALLEELERST). The disordered stretch occupies residues 13–41 (RSTLQDSDEYSNPAPLPLDQHSRKETNLD). Position 19 is a phosphoserine (S19). Y22 carries the phosphotyrosine modification. S54 carries the phosphoserine modification. Residue Y62 is modified to Phosphotyrosine. 2 consecutive short sequence motifs (LD motif) follow at residues 70–82 (NVYS…KESP) and 92–103 (QLDELMAHLTEM). Residue Y72 is modified to Phosphotyrosine; by LYN. S81 is subject to Phosphoserine. LIM zinc-binding domains are found at residues 150–208 (GHCA…QLFS), 209–267 (PRCA…AMFS), 268–326 (PKCG…HRRG), and 327–386 (TLCH…LFPL).

Belongs to the paxillin family. In terms of assembly, interacts with PTPN22. Interacts with unphosphorylated ITGA4. Interacts with PTK2B/PYK2, PTPN12, AR and SRF. Interacts (via LD motif 3) with LYN and the interaction is induced upon B-cell antigen receptor (BCR) activation. Interacts (via LD motif 3) with PTK2/FAK. Post-translationally, phosphorylated on tyrosine residues. Phosphorylation on Tyr-72 is important for its inhibitory function. Bombesin stimulates phosphorylation on Tyr-22, Tyr-62 and Tyr-72. In terms of tissue distribution, macrophages, monocytes and osteoclasts (at protein level). Strongly expressed in cells and tissues of hematopoietic origin. Highest expression in lymphoid tissues such as spleen, lymph node, thymus and appendix and in the vascular smooth muscle. Lower levels in bone marrow and fetal liver. Also expressed in peripheral blood lymphocytes and a number of hematopoietic cell lines. Very low levels found in epithelial cell lines. Expressed in prostate cancer (PCa) cells and its expression intensity is directly linked to PCa progression.

The protein resides in the cytoplasm. Its subcellular location is the cell junction. It is found in the focal adhesion. It localises to the nucleus. The protein localises to the perinuclear region. The protein resides in the cell projection. Its subcellular location is the podosome. It is found in the cell membrane. Functionally, transcriptional coactivator for androgen receptor (AR) and serum response factor (SRF). Contributes to the regulation of cell adhesion, spreading and cell migration and acts as a negative regulator in integrin-mediated cell adhesion events. Suppresses the integrin-induced tyrosine phosphorylation of paxillin (PXN). May play a critical role as an adapter protein in the formation of the adhesion zone in osteoclasts. Negatively regulates B-cell antigen receptor (BCR) signaling. The polypeptide is Leupaxin (LPXN) (Homo sapiens (Human)).